The sequence spans 298 residues: MNLNKAQAQNIASVLAEALPYIQRFSGKTIVVKYGGNAMTEEALKNGFARDIVLMKLVGMNPVVVHGGGPQIGHLLERVGKQSEFIQGMRVTDSETMDIVEMVLGGMVNKEIVNLIHQHNGNAVGLTGKDGNLIRAKKMEMTAFNEDLNAPELIDLGHVGEVERINTKVLDMLIQDDFIPVIAPVGVDEQGHSYNINADLVAGKVAEALHAEKLMLLTNTPGLLDKQGELLTGLNAESVAALIEDGTIYGGMLPKIQCALDAVQNGVESSHIIDGRVEHAVMLEVFTDEGVGTLITSH.

Residues 68–69, arginine 90, and asparagine 195 contribute to the substrate site; that span reads GG.

This sequence belongs to the acetylglutamate kinase family. ArgB subfamily.

The protein localises to the cytoplasm. It carries out the reaction N-acetyl-L-glutamate + ATP = N-acetyl-L-glutamyl 5-phosphate + ADP. It participates in amino-acid biosynthesis; L-arginine biosynthesis; N(2)-acetyl-L-ornithine from L-glutamate: step 2/4. In terms of biological role, catalyzes the ATP-dependent phosphorylation of N-acetyl-L-glutamate. This Hydrogenovibrio crunogenus (strain DSM 25203 / XCL-2) (Thiomicrospira crunogena) protein is Acetylglutamate kinase.